Consider the following 212-residue polypeptide: Pyridoxine/pyridoxamine 5'-phosphate oxidase (212 aa).

Residues 7–10 (RREY) and Lys66 contribute to the substrate site. Residues 61–66 (RIVLLK), 76–77 (YT), Arg82, Lys83, and Gln105 each bind FMN. Tyr123, Arg127, and Ser131 together coordinate substrate. FMN is bound by residues 140 to 141 (QS) and Trp185. 191–193 (RLH) provides a ligand contact to substrate. Arg195 provides a ligand contact to FMN.

The protein belongs to the pyridoxamine 5'-phosphate oxidase family. As to quaternary structure, homodimer. FMN serves as cofactor.

It catalyses the reaction pyridoxamine 5'-phosphate + O2 + H2O = pyridoxal 5'-phosphate + H2O2 + NH4(+). The enzyme catalyses pyridoxine 5'-phosphate + O2 = pyridoxal 5'-phosphate + H2O2. It participates in cofactor metabolism; pyridoxal 5'-phosphate salvage; pyridoxal 5'-phosphate from pyridoxamine 5'-phosphate: step 1/1. Its pathway is cofactor metabolism; pyridoxal 5'-phosphate salvage; pyridoxal 5'-phosphate from pyridoxine 5'-phosphate: step 1/1. Its function is as follows. Catalyzes the oxidation of either pyridoxine 5'-phosphate (PNP) or pyridoxamine 5'-phosphate (PMP) into pyridoxal 5'-phosphate (PLP). This Hahella chejuensis (strain KCTC 2396) protein is Pyridoxine/pyridoxamine 5'-phosphate oxidase.